Reading from the N-terminus, the 164-residue chain is Protein-export protein SecB (164 aa).

Belongs to the SecB family. In terms of assembly, homotetramer, a dimer of dimers. One homotetramer interacts with 1 SecA dimer.

It is found in the cytoplasm. One of the proteins required for the normal export of preproteins out of the cell cytoplasm. It is a molecular chaperone that binds to a subset of precursor proteins, maintaining them in a translocation-competent state. It also specifically binds to its receptor SecA. This Nitrosococcus oceani (strain ATCC 19707 / BCRC 17464 / JCM 30415 / NCIMB 11848 / C-107) protein is Protein-export protein SecB.